The chain runs to 289 residues: Protease HtpX (289 aa).

2 helical membrane passes run 5 to 25 (IVLFAITNIAVLILASIVMSL) and 33 to 53 (MSGLLVMALILGFGGSLISLL). His140 provides a ligand contact to Zn(2+). Glu141 is a catalytic residue. His144 is a binding site for Zn(2+). The next 2 helical transmembrane spans lie at 155–175 (LLQGVLNTFVIVLARVVGGFI) and 193–213 (GIVLVLELLFGLFATIITMWF). Glu218 is a Zn(2+) binding site.

This sequence belongs to the peptidase M48B family. Zn(2+) is required as a cofactor.

It localises to the cell inner membrane. The protein is Protease HtpX of Xylella fastidiosa (strain M23).